The following is a 233-amino-acid chain: Uridylate kinase (233 aa).

9 to 10 serves as a coordination point for ATP; sequence GS. Position 43 (glycine 43) interacts with UMP. Residues glycine 44 and arginine 48 each contribute to the ATP site. UMP is bound by residues aspartate 65 and 113-119; that span reads VTPGQTT. 3 residues coordinate ATP: threonine 139, tyrosine 145, and aspartate 148.

This sequence belongs to the UMP kinase family. As to quaternary structure, homohexamer.

It localises to the cytoplasm. It carries out the reaction UMP + ATP = UDP + ADP. Its pathway is pyrimidine metabolism; CTP biosynthesis via de novo pathway; UDP from UMP (UMPK route): step 1/1. Its activity is regulated as follows. Inhibited by UTP. Catalyzes the reversible phosphorylation of UMP to UDP. The polypeptide is Uridylate kinase (Methanosarcina barkeri (strain Fusaro / DSM 804)).